The following is a 119-amino-acid chain: Large ribosomal subunit protein bL20 (119 aa).

It belongs to the bacterial ribosomal protein bL20 family.

Its function is as follows. Binds directly to 23S ribosomal RNA and is necessary for the in vitro assembly process of the 50S ribosomal subunit. It is not involved in the protein synthesizing functions of that subunit. This Xanthomonas oryzae pv. oryzae (strain KACC10331 / KXO85) protein is Large ribosomal subunit protein bL20.